The following is a 535-amino-acid chain: UDP-glucuronosyltransferase 1A1 (535 aa).

The N-terminal stretch at 1-29 (MTVVCWSSRLLLLLPYLLLCVFGPSASHA) is a signal peptide. Asn-89, Asn-297, and Asn-435 each carry an N-linked (GlcNAc...) asparagine glycan. A helical transmembrane segment spans residues 493 to 509 (VIGFLLAIVLTVVFIVF).

The protein belongs to the UDP-glycosyltransferase family. As to quaternary structure, homodimers. Homooligomer. Interacts with UGT1A3, UGT1A4, UGT1A6, UGT1A7, UGT1A8, UGT1A9 and UGT1A10 to form heterodimers. In terms of tissue distribution, highly expressed in liver and at lower levels in colon, kidney, stomach and intestine.

It localises to the endoplasmic reticulum membrane. The catalysed reaction is glucuronate acceptor + UDP-alpha-D-glucuronate = acceptor beta-D-glucuronoside + UDP + H(+). The enzyme catalyses 17beta-estradiol + UDP-alpha-D-glucuronate = 17beta-estradiol 3-O-(beta-D-glucuronate) + UDP + H(+). It carries out the reaction 2-hydroxyestrone + UDP-alpha-D-glucuronate = 2-hydroxyestrone 3-O-(beta-D-glucuronate) + UDP + H(+). It catalyses the reaction 2-hydroxy-17beta-estradiol + UDP-alpha-D-glucuronate = 2-hydroxy-17beta-estradiol 3-O-(beta-D-glucuronate) + UDP + H(+). The catalysed reaction is 2-methoxy-17beta-estradiol + UDP-alpha-D-glucuronate = 2-methoxy-17beta-estradiol 3-O-(beta-D-glucuronate) + UDP + H(+). The enzyme catalyses 17alpha-estradiol + UDP-alpha-D-glucuronate = 17alpha-estradiol 3-O-(beta-D-glucuronate) + UDP + H(+). It carries out the reaction 16beta,17beta-estriol + UDP-alpha-D-glucuronate = 16beta,17beta-estriol 16-O-(beta-D-glucuronate) + UDP + H(+). It catalyses the reaction losartan + UDP-alpha-D-glucuronate = losartan-2-N-beta-D-glucuronide + UDP. The catalysed reaction is prunetin + UDP-alpha-D-glucuronate = prunetin-4'-O-beta-D-glucuronide + UDP. The enzyme catalyses SN-38 + UDP-alpha-D-glucuronate = SN-38 O-beta-D-glucuronide + UDP + H(+). It carries out the reaction (4Z,15Z)-bilirubin IXalpha + UDP-alpha-D-glucuronate = (4Z,15Z)-bilirubin IXalpha C12-beta-D-glucuronoside + UDP. It catalyses the reaction (4Z,15Z)-bilirubin IXalpha + UDP-alpha-D-glucuronate = (4Z,15Z)-bilirubin IXalpha C8-beta-D-glucuronoside + UDP. The catalysed reaction is (4Z,15Z)-bilirubin IXalpha C8-beta-D-glucuronoside + UDP-alpha-D-glucuronate = (4Z,15Z)-bilirubin IXalpha C8,C12-beta-D-bisglucuronoside + UDP. The enzyme catalyses (4Z,15Z)-bilirubin IXalpha C12-beta-D-glucuronoside + UDP-alpha-D-glucuronate = (4Z,15Z)-bilirubin IXalpha C8,C12-beta-D-bisglucuronoside + UDP. It carries out the reaction 8-iso-prostaglandin F2alpha + UDP-alpha-D-glucuronate = 8-iso-prostaglandin F2alpha-glucuronide + UDP + H(+). It catalyses the reaction (5Z,8Z,11Z,14Z)-eicosatetraenoate + UDP-alpha-D-glucuronate = O-[(5Z),(8Z),(11Z),(14Z)-eicosatetraenoyl]-beta-D-glucuronate + UDP. The catalysed reaction is 15-hydroxy-(5Z,8Z,11Z,13E)-eicosatetraenoate + UDP-alpha-D-glucuronate = 15-O-(beta-D-glucuronosyl)-(5Z,8Z,11Z,14Z)-eicosatetraenoate + UDP + H(+). The enzyme catalyses 20-hydroxy-(5Z,8Z,11Z,14Z)-eicosatetraenoate + UDP-alpha-D-glucuronate = 20-O-(beta-D-glucuronosyl)-(5Z,8Z,11Z,14Z)-eicosatetraenoate + UDP + H(+). It carries out the reaction prostaglandin B1 + UDP-alpha-D-glucuronate = 15-O-(beta-D-glucuronosyl)-prostaglandin B1 + UDP + H(+). It catalyses the reaction (E)-ferulate + UDP-alpha-D-glucuronate = (E)-4-O-(beta-D-glucuronosyl)-ferulate + UDP + H(+). The catalysed reaction is (E)-ferulate + UDP-alpha-D-glucuronate = (E)-ferulic acid beta-D-glucuronate ester + UDP. UDP-glucuronosyltransferase (UGT) that catalyzes phase II biotransformation reactions in which lipophilic substrates are conjugated with glucuronic acid to increase the metabolite's water solubility, thereby facilitating excretion into either the urine or bile. Essential for the elimination and detoxification of drugs, xenobiotics and endogenous compounds. Catalyzes the glucuronidation of endogenous estrogen hormones such as estradiol, estrone and estriol. Involved in the glucuronidation of bilirubin, a degradation product occurring in the normal catabolic pathway that breaks down heme in vertebrates. Involved in the glucuronidation of arachidonic acid (AA) and AA-derived eicosanoids including 15-HETE, 20-HETE, PGB1 and F2-isoprostane (8-iso-PGF2alpha). Involved in the glucuronidation of the phytochemical ferulic acid at the phenolic or the carboxylic acid group. Also catalyzes the glucuronidation the isoflavones genistein, daidzein, glycitein, formononetin, biochanin A and prunetin, which are phytoestrogens with anticancer and cardiovascular properties. Involved in the glucuronidation of the AGTR1 angiotensin receptor antagonist losartan, a drug which can inhibit the effect of angiotensin II. Involved in the biotransformation of 7-ethyl-10-hydroxycamptothecin (SN-38), the pharmacologically active metabolite of the anticancer drug irinotecan. The chain is UDP-glucuronosyltransferase 1A1 from Mus musculus (Mouse).